A 193-amino-acid polypeptide reads, in one-letter code: dCTP deaminase (193 aa).

DCTP contacts are provided by residues 110–115 (RSSLAR), Asp128, 136–138 (VLE), Tyr171, Lys178, and Gln182. Residue Glu138 is the Proton donor/acceptor of the active site.

This sequence belongs to the dCTP deaminase family. As to quaternary structure, homotrimer.

The catalysed reaction is dCTP + H2O + H(+) = dUTP + NH4(+). The protein operates within pyrimidine metabolism; dUMP biosynthesis; dUMP from dCTP (dUTP route): step 1/2. Catalyzes the deamination of dCTP to dUTP. The protein is dCTP deaminase of Escherichia coli (strain K12 / MC4100 / BW2952).